A 49-amino-acid chain; its full sequence is Isoflavone reductase homolog 2 (49 aa).

Residue Gly-5–Gly-11 participates in NADP(+) binding.

Belongs to the NmrA-type oxidoreductase family. Isoflavone reductase subfamily.

Its subcellular location is the cytoplasm. The sequence is that of Isoflavone reductase homolog 2 from Pseudotsuga menziesii (Douglas-fir).